The following is a 258-amino-acid chain: Protein OS-9 homolog (258 aa).

Residues 1 to 18 form the signal peptide; that stretch reads MNWTSLVYLWFIFKSIFA. 3 N-linked (GlcNAc...) asparagine glycosylation sites follow: Asn-2, Asn-51, and Asn-70. The MRH domain maps to 114 to 237; the sequence is TSCVFSFNLH…HINVPKLCSL (124 aa). Cys-116 and Cys-132 form a disulfide bridge. 2 residues coordinate a mannooligosaccharide derivative: Trp-127 and Gln-139. Residue Asn-165 is glycosylated (N-linked (GlcNAc...) asparagine). Disulfide bonds link Cys-193–Cys-223 and Cys-208–Cys-235. Asp-194, Arg-200, Glu-219, and Tyr-225 together coordinate a mannooligosaccharide derivative.

The protein belongs to the OS-9 family. Interacts with missfolded ER lumenal proteins.

Its subcellular location is the endoplasmic reticulum membrane. In terms of biological role, lectin involved in the quality control of the secretory pathway. As a member of the endoplasmic reticulum-associated degradation lumenal (ERAD-L) surveillance system, targets misfolded endoplasmic reticulum lumenal glycoproteins for degradation. The polypeptide is Protein OS-9 homolog (YOS9) (Candida albicans (strain SC5314 / ATCC MYA-2876) (Yeast)).